The primary structure comprises 1320 residues: CAP-Gly domain-containing linker protein 1 (1320 aa).

The tract at residues 1–53 (MSMLKPSGLKAPTKILKPGSTALKTPAAAAAPLEKTVPSEKASGPPSSETQEE) is disordered. A compositionally biased stretch (low complexity) spans 21–35 (TALKTPAAAAAPLEK). A Phosphoserine modification is found at S48. Position 50 is a phosphothreonine (T50). A CAP-Gly 1 domain is found at 78–120 (GETQFAPGQWAGIVLDEPIGKNDGSVAGVRYFQCEPLKGIFTR). The important for tubulin binding stretch occupies residues 97-101 (GKNDG). At S146 the chain carries Phosphoserine. The span at 156 to 171 (VSSSPATPSNIPQKPS) shows a compositional bias: polar residues. Residues 156–181 (VSSSPATPSNIPQKPSQPVAKETSAT) are disordered. T181 carries the phosphothreonine modification. Residues S194, S196, S199, and S203 each carry the phosphoserine modification. Residues 231–273 (GETDFAKGEWCGVELDEPLGKNDGAVAGTRYFQCQPKYGLFAP) form the CAP-Gly 2 domain. Residues 301 to 331 (TTPASLKRSPSASSLSSMSSVASSVSSKPSR) are compositionally biased toward low complexity. A disordered region spans residues 301-338 (TTPASLKRSPSASSLSSMSSVASSVSSKPSRTGLLTET). S309 is subject to Phosphoserine. S311 is subject to Phosphoserine; by PKA. Phosphoserine occurs at positions 314 and 347. The disordered stretch occupies residues 1089–1109 (SLPSNTLRESEYRKDADEEKA). Basic and acidic residues predominate over residues 1096-1109 (RESEYRKDADEEKA). Residue S1116 is modified to Phosphoserine. The tract at residues 1178–1201 (KRQLSSSSGNTDVQTEEDERAQES) is disordered. Polar residues predominate over residues 1180-1190 (QLSSSSGNTDV). At S1246 the chain carries Phosphoserine. The segment at 1299 to 1316 (PYCEICEMFGHWATNCND) adopts a CCHC-type zinc-finger fold.

Interacts with MTOR; phosphorylates and regulates CLIP1. Interacts (via CAP-Gly domains) with tubulin and TUBA1B. Interacts with SLAIN2. Interacts with MAPRE1 and MAPRE3. Interacts (via zinc finger) with DCTN1. Binds preferentially to tyrosinated microtubules, and only marginally to detyrosinated microtubules. Post-translationally, phosphorylated. Phosphorylation induces conformational changes by increasing the affinity of the N-terminus for C-terminus, resulting in inhibition of its function thus decreasing its binding to microtubules and DCTN1. Exhibits a folded, autoinhibited conformation when phosphorylated and an open conformation when dephosphorylated with increased binding affinity to microtubules and DCTN1. Phosphorylation regulates its recruitment to tyrosinated microtubules and the recruitment of vesicular cargo to microtubules in neurons. Phosphorylation by MTOR may positively regulate CLIP1 association with microtubules.

Its subcellular location is the cytoplasm. It localises to the cytoskeleton. The protein resides in the cytoplasmic vesicle membrane. It is found in the cell projection. The protein localises to the ruffle. Its function is as follows. Binds to the plus end of microtubules and regulates the dynamics of the microtubule cytoskeleton. Promotes microtubule growth and microtubule bundling. Links cytoplasmic vesicles to microtubules and thereby plays an important role in intracellular vesicle trafficking. Plays a role macropinocytosis and endosome trafficking. In Rattus norvegicus (Rat), this protein is CAP-Gly domain-containing linker protein 1 (Clip1).